We begin with the raw amino-acid sequence, 153 residues long: ORM1-like protein 3 (153 aa).

The segment at 1 to 17 (MNVGTAHSEVNPNTRVM) is important for ceramide level-sensing. The Cytoplasmic segment spans residues 1–21 (MNVGTAHSEVNPNTRVMNSRG). Helical transmembrane passes span 22-42 (IWLSYVLAIGLLHVVLLSIPF) and 43-63 (VSVPVVWTLTNLIHNMGMYIF). Over 64–94 (LHTVKGTPFETPDQGKARLLTHWEQMDYGVQ) the chain is Cytoplasmic. Residues 95-117 (FTASRKFLTITPIVLYFLTSFYT) form a helical membrane-spanning segment. The Extracellular portion of the chain corresponds to 118 to 121 (KYDQ). Residues 122 to 142 (IHFILNTVSLMSVLIPKLPQL) form a helical membrane-spanning segment. The residue at position 137 (P137) is a Hydroxyproline. The Cytoplasmic segment spans residues 143 to 153 (HGVRIFGINKY).

It belongs to the ORM family. In terms of assembly, ceramide-sensitive subunit of the serine palmitoyltransferase (SPT) complex, which is also composed of SPTLC1, SPTLC2/3 and SPTSSA/B. When hydroxylated at Pro-137, ubiquitinated via 'Lys-48'-linkage, leading to proteasomal degradation. In endothelial cells, ORMDL3 proteasomal degradation is controlled by the sphingosine 1-phosphate receptor signaling pathway.

It localises to the endoplasmic reticulum membrane. In terms of biological role, plays an essential role in the homeostatic regulation of sphingolipid de novo biosynthesis by modulating the activity of the serine palmitoyltransferase (SPT) in response to ceramide levels. When complexed to SPT, the binding of ceramides to its N-terminus stabilizes a conformation that block SPT substrate entry, hence preventing SPT catalytic activity. Through this mechanism, maintains ceramide levels at sufficient concentrations for the production of complex sphingolipids, but which prevents the accumulation of ceramides to levels that trigger apoptosis. This Bos taurus (Bovine) protein is ORM1-like protein 3 (ORMDL3).